A 469-amino-acid polypeptide reads, in one-letter code: Citrate synthase, mitochondrial (469 aa).

A mitochondrion-targeting transit peptide spans 1 to 30 (MSFLSVSRLAPKLLNSKNATYFLVAARNAS). Catalysis depends on residues His304 and His350. Position 359 (Arg359) interacts with oxaloacetate. Residue Asp405 is part of the active site. Oxaloacetate contacts are provided by Arg431 and Arg451.

Belongs to the citrate synthase family. As to quaternary structure, homodimer.

The protein resides in the mitochondrion matrix. It carries out the reaction oxaloacetate + acetyl-CoA + H2O = citrate + CoA + H(+). It functions in the pathway carbohydrate metabolism; tricarboxylic acid cycle; isocitrate from oxaloacetate: step 1/2. In terms of biological role, key enzyme of the Krebs tricarboxylic acid cycle which catalyzes the synthesis of citrate from acetyl coenzyme A and oxaloacetate. This chain is Citrate synthase, mitochondrial (cs), found in Katsuwonus pelamis (Skipjack tuna).